The chain runs to 323 residues: tRNA dimethylallyltransferase (323 aa).

32–39 (GPTASGKS) contacts ATP. 34–39 (TASGKS) lines the substrate pocket. Residues 57 to 60 (DSMQ) form an interaction with substrate tRNA region.

The protein belongs to the IPP transferase family. In terms of assembly, monomer. The cofactor is Mg(2+).

It catalyses the reaction adenosine(37) in tRNA + dimethylallyl diphosphate = N(6)-dimethylallyladenosine(37) in tRNA + diphosphate. In terms of biological role, catalyzes the transfer of a dimethylallyl group onto the adenine at position 37 in tRNAs that read codons beginning with uridine, leading to the formation of N6-(dimethylallyl)adenosine (i(6)A). The protein is tRNA dimethylallyltransferase of Rhodopseudomonas palustris (strain BisB5).